A 178-amino-acid polypeptide reads, in one-letter code: Large ribosomal subunit protein uL6 (178 aa).

This sequence belongs to the universal ribosomal protein uL6 family. As to quaternary structure, part of the 50S ribosomal subunit.

In terms of biological role, this protein binds to the 23S rRNA, and is important in its secondary structure. It is located near the subunit interface in the base of the L7/L12 stalk, and near the tRNA binding site of the peptidyltransferase center. This Limosilactobacillus fermentum (strain NBRC 3956 / LMG 18251) (Lactobacillus fermentum) protein is Large ribosomal subunit protein uL6.